The sequence spans 239 residues: Ribosomal RNA small subunit methyltransferase G (239 aa).

S-adenosyl-L-methionine is bound by residues G79, F84, 130 to 131 (AE), and R149.

The protein belongs to the methyltransferase superfamily. RNA methyltransferase RsmG family.

The protein resides in the cytoplasm. Functionally, specifically methylates the N7 position of a guanine in 16S rRNA. This is Ribosomal RNA small subunit methyltransferase G from Pelotomaculum thermopropionicum (strain DSM 13744 / JCM 10971 / SI).